Consider the following 211-residue polypeptide: MDLSDIRREYTRGGLRRNDLPDEPLPLFKKWLQQAIDAKIADPTAMTVATVDESGQPFQRIVLLKHFDRDGFIFYTNLGSRKALHLSHNSKISLHFPWHAIERQVHITGEVEKLSSLEVMKYFTSRPKESQIAAWASKQSNRISARQALEGKYLELKQKFAQGKVPVPTFWGGYRVKINSIEFWQGGENRLHDRFIYSHESSHWNIDRLAP.

Substrate is bound by residues 7 to 10 (RREY) and K65. Residues 60-65 (RIVLLK), 75-76 (YT), R81, K82, and Q104 contribute to the FMN site. Positions 122, 126, and 130 each coordinate substrate. FMN contacts are provided by residues 139–140 (QS) and W184. 190 to 192 (RLH) lines the substrate pocket. R194 is a binding site for FMN.

This sequence belongs to the pyridoxamine 5'-phosphate oxidase family. Homodimer. Requires FMN as cofactor.

The enzyme catalyses pyridoxamine 5'-phosphate + O2 + H2O = pyridoxal 5'-phosphate + H2O2 + NH4(+). It catalyses the reaction pyridoxine 5'-phosphate + O2 = pyridoxal 5'-phosphate + H2O2. It participates in cofactor metabolism; pyridoxal 5'-phosphate salvage; pyridoxal 5'-phosphate from pyridoxamine 5'-phosphate: step 1/1. The protein operates within cofactor metabolism; pyridoxal 5'-phosphate salvage; pyridoxal 5'-phosphate from pyridoxine 5'-phosphate: step 1/1. Its function is as follows. Catalyzes the oxidation of either pyridoxine 5'-phosphate (PNP) or pyridoxamine 5'-phosphate (PMP) into pyridoxal 5'-phosphate (PLP). The protein is Pyridoxine/pyridoxamine 5'-phosphate oxidase of Photobacterium profundum (strain SS9).